A 699-amino-acid chain; its full sequence is Polyribonucleotide nucleotidyltransferase (699 aa).

Mg(2+) is bound by residues D485 and D491. A KH domain is found at 552-611; the sequence is PRITTIKINPEKIRDVIGKGGAVIRALTEETGTTIELEDDGTVKIASSNGDATREAIRRI. Positions 621–689 constitute an S1 motif domain; it reads GRIYNGKVIR…RQGRVRLSIK (69 aa).

It belongs to the polyribonucleotide nucleotidyltransferase family. Component of the RNA degradosome, which is a multiprotein complex involved in RNA processing and mRNA degradation. Requires Mg(2+) as cofactor.

It is found in the cytoplasm. It catalyses the reaction RNA(n+1) + phosphate = RNA(n) + a ribonucleoside 5'-diphosphate. Involved in mRNA degradation. Catalyzes the phosphorolysis of single-stranded polyribonucleotides processively in the 3'- to 5'-direction. This is Polyribonucleotide nucleotidyltransferase from Shewanella sp. (strain ANA-3).